We begin with the raw amino-acid sequence, 230 residues long: Flagellar L-ring protein (230 aa).

Positions 1–26 (MKQVRLLPSATVRAACAVAVAAFAAG) are cleaved as a signal peptide. Cys-27 carries the N-palmitoyl cysteine lipid modification. A lipid anchor (S-diacylglycerol cysteine) is attached at Cys-27.

It belongs to the FlgH family. The basal body constitutes a major portion of the flagellar organelle and consists of four rings (L,P,S, and M) mounted on a central rod.

Its subcellular location is the cell outer membrane. The protein localises to the bacterial flagellum basal body. Its function is as follows. Assembles around the rod to form the L-ring and probably protects the motor/basal body from shearing forces during rotation. The protein is Flagellar L-ring protein of Burkholderia lata (strain ATCC 17760 / DSM 23089 / LMG 22485 / NCIMB 9086 / R18194 / 383).